The chain runs to 1083 residues: MPTNFTVVPVEAHADGGGDETAERTEAPGTPEGPEPERPSPGDGNPRENSPFLNNVEVEQESFFEGKNMALFEEEMDSNPMVSSLLNKLANYTNLSQGVVEHEEDEESRRREAKAPRMGTFIGVYLPCLQNILGVILFLRLTWIVGVAGVLESFLIVAMCCTCTMLTAISMSAIATNGVVPAGGSYYMISRSLGPEFGGAVGLCFYLGTTFAGAMYILGTIEIFLTYISPGAAIFQAEAAGGEAAAMLHNMRVYGTCTLVLMALVVFVGVKYVNKLALVFLACVVLSILAIYAGVIKSAFDPPDIPVCLLGNRTLSRRSFDACVKAYGIHNNSATSALWGLFCNGSQPSAACDEYFIQNNVTEIQGIPGAASGVFLENLWSTYAHAGAFVEKKGVPSVPVAEESRASALPYVLTDIAASFTLLVGIYFPSVTGIMAGSNRSGDLKDAQKSIPTGTILAIVTTSFIYLSCIVLFGACIEGVVLRDKFGEALQGNLVIGMLAWPSPWVIVIGSFFSTCGAGLQSLTGAPRLLQAIARDGIVPFLQVFGHGKANGEPTWALLLTVLICETGILIASLDSVAPILSMFFLMCYLFVNLACAVQTLLRTPNWRPRFKFYHWTLSFLGMSLCLALMFICSWYYALSAMLIAGCIYKYIEYRGAEKEWGDGIRGLSLNAARYALLRVEHGPPHTKNWRPQVLVMLNLDAEQAVKHPRLLSFTSQLKAGKGLTIVGSVLEGTYLDKHMEAQRAEENIRSLMSTEKTKGFCQLVVSSSLRDGMSHLIQSAGLGGLKHNTVLMAWPASWKQEDNPFSWKNFVDTVRDTTAAHQALLVAKNVDSFPQNQERFGGGHIDVWWIVHDGGMLMLLPFLLRQHKVWRKCRMRIFTVAQVDDNSIQMKKDLQMFLYHLRISAEVEVVEMVENDISAFTYERTLMMEQRSQMLKQMQLSKNEQEREAQLIHDRNTASHTAAAARTQAPPTPDKVQMTWTREKLIAEKYRSRDTSLSGFKDLFSMKPDQSNVRRMHTAVKLNGVVLNKSQDAQLVLLNMPGPPKNRQGDENYMEFLEVLTEGLNRVLLVRGGGREVITIYS.

The interval methionine 1 to phenylalanine 52 is disordered. The Cytoplasmic portion of the chain corresponds to methionine 1–glycine 119. A compositionally biased stretch (basic and acidic residues) spans alanine 12–glutamate 26. A Phosphothreonine modification is found at threonine 30. 2 positions are modified to phosphoserine: serine 50 and serine 62. A discontinuously helical membrane pass occupies residues threonine 120 to threonine 142. Positions 131 and 132 each coordinate K(+). Valine 135 is a chloride binding site. Over tryptophan 143–glycine 149 the chain is Extracellular. A helical transmembrane segment spans residues valine 150–serine 172. Residues alanine 173–glutamate 196 lie on the Cytoplasmic side of the membrane. Residues phenylalanine 197 to leucine 225 traverse the membrane as a helical segment. At threonine 226–histidine 249 the chain is on the extracellular side. The next 2 membrane-spanning stretches (helical) occupy residues asparagine 250–valine 270 and tyrosine 272–phenylalanine 300. Residues aspartate 301–serine 419 are Extracellular-facing. 2 disulfides stabilise this stretch: cysteine 308/cysteine 323 and cysteine 343/cysteine 352. N-linked (GlcNAc...) asparagine glycosylation is present at asparagine 312. N-linked (GlcNAc...) asparagine glycosylation occurs at asparagine 360. The helical transmembrane segment at phenylalanine 420–arginine 440 threads the bilayer. Positions 429 and 432 each coordinate K(+). Proline 429 contacts chloride. The chloride site is built by glycine 433 and isoleucine 434. Topologically, residues serine 441–serine 450 are cytoplasmic. Residues isoleucine 451–phenylalanine 473 traverse the membrane as a helical segment. At glycine 474 to proline 504 the chain is on the extracellular side. A helical membrane pass occupies residues tryptophan 505 to glutamine 531. The Cytoplasmic portion of the chain corresponds to alanine 532–proline 554. A run of 2 helical transmembrane segments spans residues threonine 555–isoleucine 571 and leucine 574–valine 598. Residue tyrosine 589 participates in chloride binding. Topologically, residues glutamine 599–lysine 612 are cytoplasmic. A run of 2 helical transmembrane segments spans residues phenylalanine 613–isoleucine 632 and tyrosine 636–tyrosine 651. Residues isoleucine 652–serine 1083 lie on the Cytoplasmic side of the membrane. Residues glycine 664 to valine 680 are scissor helix. 2 positions are modified to phosphothreonine: threonine 973 and threonine 980.

The protein belongs to the SLC12A transporter family. K/Cl co-transporter subfamily. As to quaternary structure, homodimer; adopts a domain-swap conformation at the scissor helices connecting the transmembrane domain and C-terminal domain. Heterodimer with K-Cl cotransporter SLC12A5. As to expression, detected in muscle, brain, lung, heart and kidney.

It is found in the cell membrane. It catalyses the reaction K(+)(in) + chloride(in) = K(+)(out) + chloride(out). With respect to regulation, activated by N-ethylmaleimide (NEM). Inhibited by furosemide, DIDS and bumetanide. The inhibition is much stronger in the presence of 50 mM K(+) in the uptake medium. Inhibited by DIOA. Inhibited by WNK3. Mediates electroneutral potassium-chloride cotransport when activated by cell swelling. May mediate K(+) uptake into Deiters' cells in the cochlea and contribute to K(+) recycling in the inner ear. Important for the survival of cochlear outer and inner hair cells and the maintenance of the organ of Corti. May be required for basolateral Cl(-) extrusion in the kidney and contribute to renal acidification. This is Solute carrier family 12 member 7 from Homo sapiens (Human).